The primary structure comprises 423 residues: Divalent metal cation transporter MntH (423 aa).

Transmembrane regions (helical) follow at residues 31–51, 58–78, 116–136, 137–157, 168–188, 213–233, 254–274, 302–322, 342–362, 363–383, and 401–421; these read LMMLGPAFIAAIGYIDPGNFA, SSFGYQLLWVVLWANLMAMLI, IIAIATDLAEFIGAAVGFQLV, FGISLMEGAMITAVATVMILI, VVIGSLLMLVAVIYIAELFFA, AAGILGATVMPHVIYLHSALF, IAMVIAGFVNIAIVAMAAAVF, VLFGVSLIASGLSSTVVGTMA, FITMAPSFVVIGLGMNTTDIL, VMSQVVLSFGIALAIIPLLIF, and YAGVVIVSLVLSLNAYLMVTL.

Belongs to the NRAMP family.

It is found in the cell inner membrane. Functionally, h(+)-stimulated, divalent metal cation uptake system. The sequence is that of Divalent metal cation transporter MntH from Vibrio campbellii (strain ATCC BAA-1116).